We begin with the raw amino-acid sequence, 1259 residues long: Neural cell adhesion molecule L1 (1259 aa).

The first 19 residues, 1 to 19 (MVMMLWYVLPLLLCSPCLL), serve as a signal peptide directing secretion. Residues 20–1122 (IQIPDEYKGH…VSTTGSFASE (1103 aa)) are Extracellular-facing. Ig-like C2-type domains are found at residues 35–128 (PVIT…HEIQ), 138–225 (PKET…EPID), 239–327 (PRLL…YYVT), 332–419 (PYWL…AYIY), 424–506 (PARI…NNVT), and 517–600 (TQIT…DEVE). 2 cysteine pairs are disulfide-bonded: C57-C113 and C157-C208. N100, N202, N246, and N293 each carry an N-linked (GlcNAc...) asparagine glycan. Cystine bridges form between C263-C311 and C353-C403. N-linked (GlcNAc...) asparagine glycosylation is found at N432, N489, and N504. C447 and C496 are oxidised to a cystine. C538 and C590 are joined by a disulfide. 2 short sequence motifs (cell attachment site) span residues 553–555 (RGD) and 562–564 (RGD). Fibronectin type-III domains are found at residues 613-711 (PVPH…TPEA), 716-809 (NPVD…SGED), 811-916 (PQVS…PEGV), 919-1014 (HPEA…MALF), and 1016-1116 (KPDF…VSTT). N670 is a glycosylation site (N-linked (GlcNAc...) asparagine). The disordered stretch occupies residues 697–724 (GEPSPVSETVVTPEAAPEKNPVDVRGEG). The span at 712-724 (APEKNPVDVRGEG) shows a compositional bias: basic and acidic residues. Residues N725, N776, N824, N848, N875, N968, N978, N1021, N1029, N1072, and N1106 are each glycosylated (N-linked (GlcNAc...) asparagine). A helical membrane pass occupies residues 1123–1145 (GWFIAFVSAIILLLLILLILCFI). The Cytoplasmic portion of the chain corresponds to 1146 to 1259 (KRSKGGKYSV…SPINPAVALE (114 aa)). S1165, R1179, S1180, S1183, S1196, S1245, S1246, and S1250 each carry phosphoserine. Disordered stretches follow at residues 1182–1209 (ESDN…SDDS) and 1228–1259 (IGQY…VALE). Residues 1243 to 1252 (NDSSGATSPI) show a composition bias toward polar residues.

The protein belongs to the immunoglobulin superfamily. L1/neurofascin/NgCAM family. As to quaternary structure, interacts with SHTN1; the interaction occurs in axonal growth cones. Interacts with isoform 2 of BSG. Isoform 2 is predominantly found in the brain, while isoform 1 is found in the peripheral nervous system.

It localises to the cell membrane. The protein resides in the cell projection. Its subcellular location is the growth cone. Functionally, neural cell adhesion molecule involved in the dynamics of cell adhesion and in the generation of transmembrane signals at tyrosine kinase receptors. During brain development, critical in multiple processes, including neuronal migration, axonal growth and fasciculation, and synaptogenesis. In the mature brain, plays a role in the dynamics of neuronal structure and function, including synaptic plasticity. This chain is Neural cell adhesion molecule L1 (L1cam), found in Rattus norvegicus (Rat).